The primary structure comprises 965 residues: Glycine dehydrogenase (decarboxylating) (965 aa).

K711 carries the N6-(pyridoxal phosphate)lysine modification.

This sequence belongs to the GcvP family. As to quaternary structure, the glycine cleavage system is composed of four proteins: P, T, L and H. Pyridoxal 5'-phosphate serves as cofactor.

The catalysed reaction is N(6)-[(R)-lipoyl]-L-lysyl-[glycine-cleavage complex H protein] + glycine + H(+) = N(6)-[(R)-S(8)-aminomethyldihydrolipoyl]-L-lysyl-[glycine-cleavage complex H protein] + CO2. Functionally, the glycine cleavage system catalyzes the degradation of glycine. The P protein binds the alpha-amino group of glycine through its pyridoxal phosphate cofactor; CO(2) is released and the remaining methylamine moiety is then transferred to the lipoamide cofactor of the H protein. The chain is Glycine dehydrogenase (decarboxylating) from Psychrobacter arcticus (strain DSM 17307 / VKM B-2377 / 273-4).